The sequence spans 512 residues: Glutathione-binding protein GsiB (512 aa).

The signal sequence occupies residues 1–26 (MTQFITHKWLAALGLASSIAAFPALA).

It belongs to the bacterial solute-binding protein 5 family. As to quaternary structure, the complex is composed of two ATP-binding proteins (GsiA), two transmembrane proteins (GsiC and GsiD) and a solute-binding protein (GsiB).

The protein localises to the periplasm. Functionally, part of the ABC transporter complex GsiABCD involved in glutathione import. Binds glutathione. This chain is Glutathione-binding protein GsiB, found in Salmonella typhimurium (strain LT2 / SGSC1412 / ATCC 700720).